Consider the following 381-residue polypeptide: MGDRERNKKRLLELLQAAGTGNGHCADCGAADPDWASYKLGIFICLHCSGVHRNFPDISKVKSVRLDFWDDSMVEFMTHHGNLNVKAKFEARVPAFYYVPQANDCLVLKEQWIRAKYERQEFTAIDKAVSHPGNREGFLWKRGRDNAQFLRRRFVLLSREGLLKYYTKEEGKAPKAVISIKDLNATFQTEKIGHPHGLQITYRKEGHTRNLFVYHDSGKEIVDWFNALRAARLQYLKLAFPDLPESELVPLITRNYLKQGFMEKTGPKHREPFKKRWFALDPQERRLLYYKNPLDAFELGQVFLGSNEQGYEVWEDLPKGIRGNRWKAGLTVITPERKFIFTCPTEKEQREWLESLRGVLSSPLSPLHLLTTSAETGCGLG.

The Arf-GAP domain maps to 9 to 132; sequence KRLLELLQAA…TAIDKAVSHP (124 aa). The C4-type zinc finger occupies 25–48; that stretch reads CADCGAADPDWASYKLGIFICLHC. PH domains lie at 132 to 233 and 255 to 361; these read PGNR…AARL and NYLK…GVLS.

Its subcellular location is the cytoplasm. It is found in the cell membrane. GTPase-activating protein for the ADP ribosylation factor family (Potential). Binds phosphatidylinositol 3,4,5-trisphosphate (PtdInsP3) and inositol 1,3,4,5-tetrakisphosphate (InsP4). Possesses a stoichiometry of two binding sites for InsP4 with identical affinity. The chain is Arf-GAP with dual PH domain-containing protein 2 (Adap2) from Mus musculus (Mouse).